Consider the following 568-residue polypeptide: Potassium-transporting ATPase potassium-binding subunit (568 aa).

10 helical membrane passes run 3 to 23 (TEILGVAVQIVLMVVLAYPLG), 64 to 84 (FLKALLILNAFWFVWGMVLLV), 133 to 153 (FVIMLFQFITAATGMAAMAGV), 179 to 199 (ILLPLSLVVGFILILQGTPMG), 255 to 275 (MVECWSILIIPMAMVLALGFY), 281 to 301 (LGYSIFGVMLFAYLAGVFINV), 375 to 395 (FGGVGVGWLNYYTFIIMAVFI), 418 to 438 (IATFVALLHPFVILVFTAISS), 497 to 517 (IVLILSRFIPIVGQVAIAGLL), and 535 to 555 (VTFAVMTFAVIFIVAALSFFP).

It belongs to the KdpA family. In terms of assembly, the system is composed of three essential subunits: KdpA, KdpB and KdpC.

It localises to the cell inner membrane. Its function is as follows. Part of the high-affinity ATP-driven potassium transport (or Kdp) system, which catalyzes the hydrolysis of ATP coupled with the electrogenic transport of potassium into the cytoplasm. This subunit binds the periplasmic potassium ions and delivers the ions to the membrane domain of KdpB through an intramembrane tunnel. The protein is Potassium-transporting ATPase potassium-binding subunit of Bacteroides fragilis (strain ATCC 25285 / DSM 2151 / CCUG 4856 / JCM 11019 / LMG 10263 / NCTC 9343 / Onslow / VPI 2553 / EN-2).